Reading from the N-terminus, the 213-residue chain is ATP synthase peripheral stalk subunit OSCP, mitochondrial (213 aa).

The N-terminal 23 residues, 1-23, are a transit peptide targeting the mitochondrion; that stretch reads MAAPAVSGLSRQVRYFSTSVVRP. Positions 5–23 match the SIFI-degron motif; the sequence is AVSGLSRQVRYFSTSVVRP. N6-acetyllysine occurs at positions 54, 60, 70, and 73. Lysine 90 carries the post-translational modification N6-succinyllysine. N6-acetyllysine; alternate is present on residues lysine 158 and lysine 162. 2 positions are modified to N6-succinyllysine; alternate: lysine 158 and lysine 162. Lysine 172, lysine 176, and lysine 192 each carry N6-acetyllysine. The residue at position 199 (lysine 199) is an N6-succinyllysine.

This sequence belongs to the ATPase delta chain family. Component of the ATP synthase complex composed at least of ATP5F1A/subunit alpha, ATP5F1B/subunit beta, ATP5MC1/subunit c (homooctomer), MT-ATP6/subunit a, MT-ATP8/subunit 8, ATP5ME/subunit e, ATP5MF/subunit f, ATP5MG/subunit g, ATP5MK/subunit k, ATP5MJ/subunit j, ATP5F1C/subunit gamma, ATP5F1D/subunit delta, ATP5F1E/subunit epsilon, ATP5PF/subunit F6, ATP5PB/subunit b, ATP5PD/subunit d, ATP5PO/subunit OSCP. ATP synthase complex consists of a soluble F(1) head domain (subunits alpha(3) and beta(3)) - the catalytic core - and a membrane F(0) domain - the membrane proton channel (subunits c, a, 8, e, f, g, k and j). These two domains are linked by a central stalk (subunits gamma, delta, and epsilon) rotating inside the F1 region and a stationary peripheral stalk (subunits F6, b, d, and OSCP). Acetylation at Lys-162 decreases ATP production. Deacetylated by SIRT3. Post-translationally, in response to mitochondrial stress, the precursor protein is ubiquitinated by the SIFI complex in the cytoplasm before mitochondrial import, leading to its degradation. Within the SIFI complex, UBR4 initiates ubiquitin chain that are further elongated or branched by KCMF1.

Its subcellular location is the mitochondrion. The protein localises to the mitochondrion inner membrane. Its function is as follows. Subunit OSCP, of the mitochondrial membrane ATP synthase complex (F(1)F(0) ATP synthase or Complex V) that produces ATP from ADP in the presence of a proton gradient across the membrane which is generated by electron transport complexes of the respiratory chain. ATP synthase complex consist of a soluble F(1) head domain - the catalytic core - and a membrane F(1) domain - the membrane proton channel. These two domains are linked by a central stalk rotating inside the F(1) region and a stationary peripheral stalk. During catalysis, ATP synthesis in the catalytic domain of F(1) is coupled via a rotary mechanism of the central stalk subunits to proton translocation. In vivo, can only synthesize ATP although its ATP hydrolase activity can be activated artificially in vitro. Part of the complex F(0) domain. Part of the complex F(0) domain and the peripheric stalk, which acts as a stator to hold the catalytic alpha(3)beta(3) subcomplex and subunit a/ATP6 static relative to the rotary elements. The protein is ATP synthase peripheral stalk subunit OSCP, mitochondrial of Plecturocebus moloch (Dusky titi monkey).